A 173-amino-acid chain; its full sequence is RNA silencing suppressor p19 (173 aa).

The span at 1 to 21 (MERAIQRSDAREQANSERWDG) shows a compositional bias: basic and acidic residues. Residues 1-34 (MERAIQRSDAREQANSERWDGRCGGTITPFKLPD) are disordered.

The protein belongs to the tombusvirus protein p19 family. Homodimer.

Viral suppressor of RNA silencing which binds specifically to silencing RNAs (siRNAs). Acts as a molecular caliper to specifically select siRNAs based on the length of the duplex region of the RNA. This chain is RNA silencing suppressor p19, found in Cucumis sativus (Cucumber).